A 249-amino-acid polypeptide reads, in one-letter code: tRNA (guanine-N(1)-)-methyltransferase (249 aa).

S-adenosyl-L-methionine contacts are provided by residues Gly-113 and 133–138; that span reads IGDFVV.

This sequence belongs to the RNA methyltransferase TrmD family. In terms of assembly, homodimer.

The protein resides in the cytoplasm. It catalyses the reaction guanosine(37) in tRNA + S-adenosyl-L-methionine = N(1)-methylguanosine(37) in tRNA + S-adenosyl-L-homocysteine + H(+). Specifically methylates guanosine-37 in various tRNAs. This Neisseria meningitidis serogroup C / serotype 2a (strain ATCC 700532 / DSM 15464 / FAM18) protein is tRNA (guanine-N(1)-)-methyltransferase.